The chain runs to 483 residues: Protein FIZZY-RELATED 2 (483 aa).

The disordered stretch occupies residues 1–28; it reads MEEEDPTASNVITNSNSSSMRNLSPAMN. A compositionally biased stretch (polar residues) spans 7–28; it reads TASNVITNSNSSSMRNLSPAMN. 7 WD repeats span residues 174-211, 215-254, 257-294, 298-337, 340-382, 384-425, and 428-467; these read QDDFYLNLVDWSAQNVLAVGLGNCVYLWNACSSKVTKL, GAEDSVCSVGWALRGTHLAVGTSTGKVQIWDASRCKRTRT, GHRLRVGALAWGSSVLSSGSRDKSILQRDIRCQEDHVS, GHKSEVCGLKWSYDNRELASGGNDNRLFVWNQHSTQPVLK, EHTA…HLSS, DTCS…KIAT, and GHTYRVLYLAVSPDGQTIVTGAGDETLRFWNVFPSPKSQN.

It belongs to the WD repeat CDC20/Fizzy family. As to quaternary structure, associates with the APC/C complex. Interacts with CDC20-1, CDC20-2, CYCA1-1, CYCA1-2, CYCA3-4, CYCB1-1 and CYCB1-2. Binds to GIG1 and PYM. In terms of tissue distribution, expressed in seedlings, flowers, leaves and roots. Expressed in the differentiating cell files of the root elongation zone.

The protein resides in the nucleus. The protein operates within protein modification; protein ubiquitination. Activator protein that regulates the ubiquitin ligase activity and substrate specificity of the anaphase promoting complex/cyclosome (APC/C). Necessary and sufficient for endoreduplication and correct cell expansion. Controls meristem size by stimulating endoreduplication in the elongation zone. The protein is Protein FIZZY-RELATED 2 (FZR2) of Arabidopsis thaliana (Mouse-ear cress).